A 292-amino-acid chain; its full sequence is Elongation factor Ts (292 aa).

The segment at 80-83 (TDFV) is involved in Mg(2+) ion dislocation from EF-Tu.

Belongs to the EF-Ts family.

The protein localises to the cytoplasm. In terms of biological role, associates with the EF-Tu.GDP complex and induces the exchange of GDP to GTP. It remains bound to the aminoacyl-tRNA.EF-Tu.GTP complex up to the GTP hydrolysis stage on the ribosome. The protein is Elongation factor Ts of Limosilactobacillus fermentum (strain NBRC 3956 / LMG 18251) (Lactobacillus fermentum).